We begin with the raw amino-acid sequence, 456 residues long: Probable glycine dehydrogenase (decarboxylating) subunit 1 (456 aa).

Belongs to the GcvP family. N-terminal subunit subfamily. The glycine cleavage system is composed of four proteins: P, T, L and H. In this organism, the P 'protein' is a heterodimer of two subunits.

The catalysed reaction is N(6)-[(R)-lipoyl]-L-lysyl-[glycine-cleavage complex H protein] + glycine + H(+) = N(6)-[(R)-S(8)-aminomethyldihydrolipoyl]-L-lysyl-[glycine-cleavage complex H protein] + CO2. Its function is as follows. The glycine cleavage system catalyzes the degradation of glycine. The P protein binds the alpha-amino group of glycine through its pyridoxal phosphate cofactor; CO(2) is released and the remaining methylamine moiety is then transferred to the lipoamide cofactor of the H protein. The chain is Probable glycine dehydrogenase (decarboxylating) subunit 1 from Rhizorhabdus wittichii (strain DSM 6014 / CCUG 31198 / JCM 15750 / NBRC 105917 / EY 4224 / RW1) (Sphingomonas wittichii).